Here is a 347-residue protein sequence, read N- to C-terminus: 3-isopropylmalate dehydrogenase (347 aa).

Substrate-binding residues include Arg95, Arg105, Arg129, and Asp220. Mg(2+)-binding residues include Asp220, Asp244, and Asp248. Position 280 to 292 (280 to 292) interacts with NAD(+); that stretch reads GSAPDIAGQGKAD.

This sequence belongs to the isocitrate and isopropylmalate dehydrogenases family. LeuB type 2 subfamily. As to quaternary structure, homodimer. The cofactor is Mg(2+). Mn(2+) is required as a cofactor.

Its subcellular location is the cytoplasm. It catalyses the reaction (2R,3S)-3-isopropylmalate + NAD(+) = 4-methyl-2-oxopentanoate + CO2 + NADH. Its pathway is amino-acid biosynthesis; L-leucine biosynthesis; L-leucine from 3-methyl-2-oxobutanoate: step 3/4. In terms of biological role, catalyzes the oxidation of 3-carboxy-2-hydroxy-4-methylpentanoate (3-isopropylmalate) to 3-carboxy-4-methyl-2-oxopentanoate. The product decarboxylates to 4-methyl-2 oxopentanoate. The chain is 3-isopropylmalate dehydrogenase from Beutenbergia cavernae (strain ATCC BAA-8 / DSM 12333 / CCUG 43141 / JCM 11478 / NBRC 16432 / NCIMB 13614 / HKI 0122).